The primary structure comprises 166 residues: Ribosome maturation factor RimP (166 aa).

It belongs to the RimP family.

The protein resides in the cytoplasm. Its function is as follows. Required for maturation of 30S ribosomal subunits. This chain is Ribosome maturation factor RimP, found in Psychrobacter cryohalolentis (strain ATCC BAA-1226 / DSM 17306 / VKM B-2378 / K5).